The following is a 205-amino-acid chain: Putative 3-methyladenine DNA glycosylase (205 aa).

Belongs to the DNA glycosylase MPG family.

This Bacillus cereus (strain Q1) protein is Putative 3-methyladenine DNA glycosylase.